Here is a 101-residue protein sequence, read N- to C-terminus: Small ribosomal subunit protein uS14 (101 aa).

The protein belongs to the universal ribosomal protein uS14 family. In terms of assembly, part of the 30S ribosomal subunit. Contacts proteins S3 and S10.

In terms of biological role, binds 16S rRNA, required for the assembly of 30S particles and may also be responsible for determining the conformation of the 16S rRNA at the A site. The polypeptide is Small ribosomal subunit protein uS14 (Cereibacter sphaeroides (strain ATCC 17029 / ATH 2.4.9) (Rhodobacter sphaeroides)).